We begin with the raw amino-acid sequence, 199 residues long: Recombination protein RecR (199 aa).

The C4-type zinc finger occupies Cys59 to Cys74. The 95-residue stretch at Gly82 to Pro176 folds into the Toprim domain.

The protein belongs to the RecR family.

Its function is as follows. May play a role in DNA repair. It seems to be involved in an RecBC-independent recombinational process of DNA repair. It may act with RecF and RecO. The protein is Recombination protein RecR of Ruegeria sp. (strain TM1040) (Silicibacter sp.).